Here is a 246-residue protein sequence, read N- to C-terminus: MPAKLSVNLNAIAMLRNRRDLPWPSVTGIGRLALAAGAHGLTVHPRPDERHTRHSDLPEIRALIDDEFPQAEFNIEGYPSEDFLALVEKHQPEQVTLVPDDPAQATSDHGWNFVADAALLTPIVRRLKKGGFRVSLFSDADPAGMTAARDTGADRIELYTGPYGSYHSDSAKADKELERLGKTADAAFAAGLQVNAGHDLTVGNLPALAKRIPALAEVSIGHGLTADALEYGMAGTVGRFLRACGW.

3-amino-2-oxopropyl phosphate-binding residues include asparagine 8 and arginine 19. Residue histidine 44 is the Proton acceptor of the active site. 1-deoxy-D-xylulose 5-phosphate-binding residues include arginine 46 and histidine 51. The active-site Proton acceptor is the glutamate 76. Threonine 106 lines the 1-deoxy-D-xylulose 5-phosphate pocket. Histidine 198 (proton donor) is an active-site residue. Residues aspartate 199 and 221–222 (GH) each bind 3-amino-2-oxopropyl phosphate.

This sequence belongs to the PNP synthase family. Homooctamer; tetramer of dimers.

It localises to the cytoplasm. It carries out the reaction 3-amino-2-oxopropyl phosphate + 1-deoxy-D-xylulose 5-phosphate = pyridoxine 5'-phosphate + phosphate + 2 H2O + H(+). It participates in cofactor biosynthesis; pyridoxine 5'-phosphate biosynthesis; pyridoxine 5'-phosphate from D-erythrose 4-phosphate: step 5/5. In terms of biological role, catalyzes the complicated ring closure reaction between the two acyclic compounds 1-deoxy-D-xylulose-5-phosphate (DXP) and 3-amino-2-oxopropyl phosphate (1-amino-acetone-3-phosphate or AAP) to form pyridoxine 5'-phosphate (PNP) and inorganic phosphate. In Mesorhizobium japonicum (strain LMG 29417 / CECT 9101 / MAFF 303099) (Mesorhizobium loti (strain MAFF 303099)), this protein is Pyridoxine 5'-phosphate synthase.